Here is a 180-residue protein sequence, read N- to C-terminus: Tubulin polymerization-promoting protein homolog (180 aa).

Composition is skewed to basic and acidic residues over residues 136–158 (TGAHKERFDAEGKGKGKSGRADT) and 169–180 (KNKDSYDKTHGK). The tract at residues 136-180 (TGAHKERFDAEGKGKGKSGRADTTENTGYVGAYKNKDSYDKTHGK) is disordered.

It belongs to the TPPP family.

In terms of biological role, regulator of microtubule dynamics. This is Tubulin polymerization-promoting protein homolog from Caenorhabditis elegans.